Consider the following 436-residue polypeptide: Histidinol dehydrogenase (436 aa).

Residues Tyr-136, Gln-198, and Asn-221 each contribute to the NAD(+) site. Positions 244, 266, and 269 each coordinate substrate. Gln-266 and His-269 together coordinate Zn(2+). Catalysis depends on proton acceptor residues Glu-334 and His-335. The substrate site is built by His-335, Asp-368, Glu-422, and His-427. Asp-368 contributes to the Zn(2+) binding site. His-427 provides a ligand contact to Zn(2+).

The protein belongs to the histidinol dehydrogenase family. It depends on Zn(2+) as a cofactor.

The catalysed reaction is L-histidinol + 2 NAD(+) + H2O = L-histidine + 2 NADH + 3 H(+). The protein operates within amino-acid biosynthesis; L-histidine biosynthesis; L-histidine from 5-phospho-alpha-D-ribose 1-diphosphate: step 9/9. Functionally, catalyzes the sequential NAD-dependent oxidations of L-histidinol to L-histidinaldehyde and then to L-histidine. This is Histidinol dehydrogenase from Dehalococcoides mccartyi (strain ATCC BAA-2266 / KCTC 15142 / 195) (Dehalococcoides ethenogenes (strain 195)).